The sequence spans 94 residues: Phosphoribosyl-ATP pyrophosphatase (94 aa).

This sequence belongs to the PRA-PH family.

It is found in the cytoplasm. The enzyme catalyses 1-(5-phospho-beta-D-ribosyl)-ATP + H2O = 1-(5-phospho-beta-D-ribosyl)-5'-AMP + diphosphate + H(+). Its pathway is amino-acid biosynthesis; L-histidine biosynthesis; L-histidine from 5-phospho-alpha-D-ribose 1-diphosphate: step 2/9. In Pyrobaculum islandicum (strain DSM 4184 / JCM 9189 / GEO3), this protein is Phosphoribosyl-ATP pyrophosphatase.